Here is a 445-residue protein sequence, read N- to C-terminus: Nuclear hormone receptor family member nhr-1 (445 aa).

The interval 19–55 is disordered; it reads PMVNSQRNEDPSMYMNGSAASVSHTNGSSSMGNDQKF. The span at 36–51 shows a compositional bias: polar residues; the sequence is SAASVSHTNGSSSMGN. The segment at residues 70–145 is a DNA-binding region (nuclear receptor); the sequence is GELCAVCSDL…VGMDAKALQI (76 aa). 2 NR C4-type zinc fingers span residues 73–93 and 109–133; these read CAVC…CNGC and CQYN…FNKC. The NR LBD domain occupies 179–444; sequence QDQEIIDQLT…PFVKELCMKR (266 aa).

It belongs to the nuclear hormone receptor family.

Its subcellular location is the nucleus. Its function is as follows. Orphan nuclear receptor which acts in concert with the insulin/IGF-1-like signaling (IIS) pathway during osmotic stress, perhaps in response to a ligand modified by the sulfotransferase ssu-1. The sequence is that of Nuclear hormone receptor family member nhr-1 (nhr-1) from Caenorhabditis elegans.